Consider the following 291-residue polypeptide: Acidic endochitinase (291 aa).

The N-terminal stretch at 1-22 (MIKYSFLLTALVLFLRALKLEA) is a signal peptide. The GH18 domain maps to 23 to 291 (GDIVIYWGQN…GYSSAIKANV (269 aa)). 2 cysteine pairs are disulfide-bonded: cysteine 42–cysteine 89 and cysteine 72–cysteine 79. Glutamate 149 acts as the Proton donor in catalysis. Cysteine 180 and cysteine 209 form a disulfide bridge.

This sequence belongs to the glycosyl hydrolase 18 family. Chitinase class II subfamily.

The protein localises to the secreted. It localises to the cell wall. It carries out the reaction Random endo-hydrolysis of N-acetyl-beta-D-glucosaminide (1-&gt;4)-beta-linkages in chitin and chitodextrins.. In terms of biological role, this protein functions as a defense against chitin containing fungal pathogens. In Nicotiana tabacum (Common tobacco), this protein is Acidic endochitinase.